A 617-amino-acid chain; its full sequence is ATP-dependent RNA helicase DBP1 (617 aa).

Residues M1 to S90 are disordered. A compositionally biased stretch (polar residues) spans K7–E17. Positions P38 to R58 are enriched in basic and acidic residues. Positions G79–S90 are enriched in polar residues. Positions L154–K182 match the Q motif motif. Positions I185–L374 constitute a Helicase ATP-binding domain. A198–T205 lines the ATP pocket. The DEAD box motif lies at D318–D321. One can recognise a Helicase C-terminal domain in the interval N385–S545. The disordered stretch occupies residues S542–W617. A compositionally biased stretch (polar residues) spans F580–G594.

This sequence belongs to the DEAD box helicase family. DDX3/DED1 subfamily.

The protein resides in the cytoplasm. It carries out the reaction ATP + H2O = ADP + phosphate + H(+). Its function is as follows. ATP-binding RNA helicase involved in translation initiation. Remodels RNA in response to ADP and ATP concentrations by facilitating disruption, but also formation of RNA duplexes. Redundant to DED1, may be required in conditions in which DED1 expression is decreased. This is ATP-dependent RNA helicase DBP1 (DBP1) from Saccharomyces cerevisiae (strain ATCC 204508 / S288c) (Baker's yeast).